Here is a 229-residue protein sequence, read N- to C-terminus: UPF0488 protein C8orf33 homolog (229 aa).

Ala2 is subject to N-acetylalanine. Arg27 is modified (omega-N-methylarginine). Positions 55–101 (SRAHPLGDEGGTASKKQNKKKKTRNRASVANGGEKASEKLAPEEVPL) are disordered. Over residues 70–79 (KQNKKKKTRN) the composition is skewed to basic residues. Ser82 is modified (phosphoserine).

The protein belongs to the UPF0488 family.

In Pongo abelii (Sumatran orangutan), this protein is UPF0488 protein C8orf33 homolog.